A 126-amino-acid polypeptide reads, in one-letter code: Aspartate 1-decarboxylase (126 aa).

S25 (schiff-base intermediate with substrate; via pyruvic acid) is an active-site residue. At S25 the chain carries Pyruvic acid (Ser). Residue T57 coordinates substrate. The active-site Proton donor is Y58. 73-75 is a binding site for substrate; that stretch reads GAA.

This sequence belongs to the PanD family. Heterooctamer of four alpha and four beta subunits. It depends on pyruvate as a cofactor. Post-translationally, is synthesized initially as an inactive proenzyme, which is activated by self-cleavage at a specific serine bond to produce a beta-subunit with a hydroxyl group at its C-terminus and an alpha-subunit with a pyruvoyl group at its N-terminus.

The protein resides in the cytoplasm. The enzyme catalyses L-aspartate + H(+) = beta-alanine + CO2. It participates in cofactor biosynthesis; (R)-pantothenate biosynthesis; beta-alanine from L-aspartate: step 1/1. Catalyzes the pyruvoyl-dependent decarboxylation of aspartate to produce beta-alanine. This Tolumonas auensis (strain DSM 9187 / NBRC 110442 / TA 4) protein is Aspartate 1-decarboxylase.